Consider the following 223-residue polypeptide: Urease accessory protein UreF (223 aa).

The protein belongs to the UreF family. As to quaternary structure, ureD, UreF and UreG form a complex that acts as a GTP-hydrolysis-dependent molecular chaperone, activating the urease apoprotein by helping to assemble the nickel containing metallocenter of UreC. The UreE protein probably delivers the nickel.

The protein resides in the cytoplasm. Its function is as follows. Required for maturation of urease via the functional incorporation of the urease nickel metallocenter. The chain is Urease accessory protein UreF from Agrobacterium fabrum (strain C58 / ATCC 33970) (Agrobacterium tumefaciens (strain C58)).